Here is a 317-residue protein sequence, read N- to C-terminus: SWI/SNF-related matrix-associated actin-dependent regulator of chromatin subfamily E member 1-related (317 aa).

Residues 1-22 (MSHGPKQPGAASAPASGKAPGQ) are compositionally biased toward low complexity. A disordered region spans residues 1-71 (MSHGPKQPGA…RKKILPNGPK (71 aa)). Lysine 31 participates in a covalent cross-link: Glycyl lysine isopeptide (Lys-Gly) (interchain with G-Cter in SUMO2). A compositionally biased stretch (basic and acidic residues) spans 31 to 52 (KQERGEGPRAGEKGSHEEEPVK). Residues 53–65 (KRGWPKGKKRKKI) are compositionally biased toward basic residues. A DNA-binding region (HMG box) is located at residues 70–138 (PKAPVTGYVR…QYMKELRAYQ (69 aa)). Serine 160 carries the phosphoserine modification. Positions 190–257 (EEFLDQNKAR…LQQQLQAVRQ (68 aa)) form a coiled coil.

Component of a BHC histone deacetylase complex that contains HDAC1, HDAC2, HMG20B/BRAF35, KDM1A, RCOR1/CoREST and PHF21A/BHC80. The BHC complex may also contain ZMYM2, ZNF217, ZMYM3, GSE1 and GTF2I. Interacts with the BRCA2 tumor suppressor protein.

Its subcellular location is the nucleus. It is found in the chromosome. Its function is as follows. Required for correct progression through G2 phase of the cell cycle and entry into mitosis. Required for RCOR1/CoREST mediated repression of neuronal specific gene promoters. The sequence is that of SWI/SNF-related matrix-associated actin-dependent regulator of chromatin subfamily E member 1-related (HMG20B) from Bos taurus (Bovine).